The following is a 185-amino-acid chain: Photosystem I assembly protein Ycf4 (185 aa).

2 helical membrane passes run 21-43 (NFCW…TSSY) and 63-85 (GLVM…CTIL).

Belongs to the Ycf4 family.

Its subcellular location is the plastid. It localises to the chloroplast thylakoid membrane. Seems to be required for the assembly of the photosystem I complex. The chain is Photosystem I assembly protein Ycf4 from Brassica oleracea (Wild cabbage).